Here is a 78-residue protein sequence, read N- to C-terminus: RVINDDCPNLIGNRDLYKKVEWICEDCSNIFRNTGMATLCRKNCFFNEDFLWCVYATERTEEMSQLRQWVGILGAGRE.

3 disulfide bridges follow: Cys7/Cys44, Cys24/Cys40, and Cys27/Cys53.

The protein localises to the secreted. In terms of biological role, inhibits Y-organs where molting hormone (ecdysteroid) is secreted. A molting cycle is initiated when MIH secretion diminishes or stops. Also has significant hyperglycemic hormone (CHH) activity. The polypeptide is Molt-inhibiting hormone (Cancer pagurus (Rock crab)).